A 384-amino-acid chain; its full sequence is Glutamate 5-kinase (384 aa).

Residue K24 coordinates ATP. Residues S64, D149, and N161 each coordinate substrate. Residues 181-182 (TD) and 223-229 (TGGMRTK) each bind ATP. In terms of domain architecture, PUA spans 288–370 (PGAILIDAGA…RDIQPLLGYT (83 aa)).

It belongs to the glutamate 5-kinase family.

The protein resides in the cytoplasm. It carries out the reaction L-glutamate + ATP = L-glutamyl 5-phosphate + ADP. Its pathway is amino-acid biosynthesis; L-proline biosynthesis; L-glutamate 5-semialdehyde from L-glutamate: step 1/2. Functionally, catalyzes the transfer of a phosphate group to glutamate to form L-glutamate 5-phosphate. The polypeptide is Glutamate 5-kinase (Xylella fastidiosa (strain 9a5c)).